Consider the following 98-residue polypeptide: DNA-binding protein Fis (98 aa).

The segment at residues 74–93 is a DNA-binding region (H-T-H motif); it reads QTRAATMLGINRGTLRKKLK.

Belongs to the transcriptional regulatory Fis family. In terms of assembly, homodimer.

Functionally, activates ribosomal RNA transcription. Plays a direct role in upstream activation of rRNA promoters. The polypeptide is DNA-binding protein Fis (Glaesserella parasuis serovar 5 (strain SH0165) (Haemophilus parasuis)).